Consider the following 737-residue polypeptide: Probable beta-glucosidase L (737 aa).

Residues M1–A19 form the signal peptide. Residue N225 is glycosylated (N-linked (GlcNAc...) asparagine). Residue D253 is part of the active site. 3 N-linked (GlcNAc...) asparagine glycosylation sites follow: N340, N365, and N608.

Belongs to the glycosyl hydrolase 3 family.

The protein resides in the secreted. The enzyme catalyses Hydrolysis of terminal, non-reducing beta-D-glucosyl residues with release of beta-D-glucose.. It participates in glycan metabolism; cellulose degradation. Beta-glucosidases are one of a number of cellulolytic enzymes involved in the degradation of cellulosic biomass. Catalyzes the last step releasing glucose from the inhibitory cellobiose. In Emericella nidulans (strain FGSC A4 / ATCC 38163 / CBS 112.46 / NRRL 194 / M139) (Aspergillus nidulans), this protein is Probable beta-glucosidase L (bglL).